The primary structure comprises 172 residues: Adenine phosphoribosyltransferase (172 aa).

Belongs to the purine/pyrimidine phosphoribosyltransferase family. In terms of assembly, homodimer.

Its subcellular location is the cytoplasm. The enzyme catalyses AMP + diphosphate = 5-phospho-alpha-D-ribose 1-diphosphate + adenine. It functions in the pathway purine metabolism; AMP biosynthesis via salvage pathway; AMP from adenine: step 1/1. In terms of biological role, catalyzes a salvage reaction resulting in the formation of AMP, that is energically less costly than de novo synthesis. The polypeptide is Adenine phosphoribosyltransferase (Staphylococcus epidermidis (strain ATCC 35984 / DSM 28319 / BCRC 17069 / CCUG 31568 / BM 3577 / RP62A)).